The primary structure comprises 372 residues: MEMAPTMDLEIRNGNGYGDSGEELLAAQAHIYNHIFNFISSMALKCAVELNIPEILHNHQPKAVTLSELVQALQIPQAKSACLYRLLRILVHSGFFAITKIQSEGDEEGYLPTLSSKLLLKNHPMSMSPCLLGLVNPTMVAPMHFFSDWFKRSDDMTPFEATHGASLWKYFGETPHMAEIFNEAMGCETRLAMSVVLKECKGKLEGISSLVDVGGGTGNVGRAIAEAFPNVKCTVLDLPQVVGNLKGSNNLEFVSGDMFQFIPPADVVFLKWILHDWNDEECIKILKRCKEAIPSKEEGGKLIIIDMVVNDHNKGSYESTETQLFYDLTLMALLTGTERTETEWKKLFVAAGFTSYIISPVLGLKSIIEVFP.

Positions 214, 237, 257, 258, and 271 each coordinate S-adenosyl-L-homocysteine. His-275 functions as the Proton acceptor in the catalytic mechanism. Active-site residues include Asp-306 and Glu-338.

Belongs to the class I-like SAM-binding methyltransferase superfamily. Cation-independent O-methyltransferase family. COMT subfamily. In terms of assembly, homodimer. Mostly expressed in stems, and, to a lower extent, in leaves.

It carries out the reaction (-)-pluviatolide + S-adenosyl-L-methionine = (-)-bursehernin + S-adenosyl-L-homocysteine + H(+). It functions in the pathway aromatic compound metabolism; phenylpropanoid biosynthesis. In terms of biological role, O-methyltransferase involved in the biosynthesis of etoposide, a chemotherapeutic compound of the topoisomerase inhibitor family. Catalyzes the methylation of (-)-pluviatolide to produce (-)-bursehernin. The protein is Pluviatolide O-methyltransferase of Sinopodophyllum hexandrum (Himalayan may apple).